Reading from the N-terminus, the 562-residue chain is Dihydroxy-acid dehydratase (562 aa).

Asp80 is a Mg(2+) binding site. Cys121 lines the [2Fe-2S] cluster pocket. Mg(2+)-binding residues include Asp122 and Lys123. The residue at position 123 (Lys123) is an N6-carboxylysine. Residue Cys194 coordinates [2Fe-2S] cluster. A Mg(2+)-binding site is contributed by Glu446. The active-site Proton acceptor is the Ser472.

This sequence belongs to the IlvD/Edd family. In terms of assembly, homodimer. [2Fe-2S] cluster serves as cofactor. It depends on Mg(2+) as a cofactor.

It catalyses the reaction (2R)-2,3-dihydroxy-3-methylbutanoate = 3-methyl-2-oxobutanoate + H2O. The enzyme catalyses (2R,3R)-2,3-dihydroxy-3-methylpentanoate = (S)-3-methyl-2-oxopentanoate + H2O. The protein operates within amino-acid biosynthesis; L-isoleucine biosynthesis; L-isoleucine from 2-oxobutanoate: step 3/4. Its pathway is amino-acid biosynthesis; L-valine biosynthesis; L-valine from pyruvate: step 3/4. Its function is as follows. Functions in the biosynthesis of branched-chain amino acids. Catalyzes the dehydration of (2R,3R)-2,3-dihydroxy-3-methylpentanoate (2,3-dihydroxy-3-methylvalerate) into 2-oxo-3-methylpentanoate (2-oxo-3-methylvalerate) and of (2R)-2,3-dihydroxy-3-methylbutanoate (2,3-dihydroxyisovalerate) into 2-oxo-3-methylbutanoate (2-oxoisovalerate), the penultimate precursor to L-isoleucine and L-valine, respectively. The polypeptide is Dihydroxy-acid dehydratase (Staphylococcus aureus (strain COL)).